The sequence spans 538 residues: MTVNKGISIRVNNVGDKVSYKENELLTNYTYHTNVVHTNSDKTQFEVTPLDKNYQFKVDLNKPERLGVMLVGLGGNNGSTMMAAVLANKHNVCFRTRDKEGLTEPNYYGSLTQSSTIKLGVDSKGKDVYVPFNSLVPMVNPNDFVVSGWDINGATMDQAMERASVLEVDLRNKLAPMMKDHKPLKSVYYPDFIAANQDERADNCLNVDPQTGKVTTTGKWEHLNHIRNDIRTFKQQNDLDKVIILWTANTERYVEILPGVNDTMENLLEAIKNDHTEIAPSTIFAAASILEHCPYINGSPQNTFVPGLIELAEKNDSLIAGDDFKSGQTKMKSVLAQFLVDAGIRPVSIASYNHLGNNDGYNLSSPQQFRSKEISKASVVDDIIESNPILYNDKLGNKIDHCIVIKYMHAVGDSKVAMDEYYSELMLGGHNRISIHNVCEDSLLATPLIIDLIVMTEFCSRVTYRNVDGQDGAEAKGDFENFYPVLSFLSYWLKAPLTKPGYQPINGLNKQRTALENFLRLLIGLPAIDELRFEERLK.

Residues Gly-74, Gly-75, Asn-76, Asn-77, Asp-150, Ser-186, Val-187, Gln-197, Asp-198, Arg-200, Thr-247, Ala-248, Asn-249, Thr-250, Gly-298, Ser-299, Asp-323, Ser-326, Asn-357, Asn-358, Asp-359, Lys-372, Gly-412, Asp-413, Asp-441, and Ser-442 each coordinate NAD(+).

Belongs to the myo-inositol 1-phosphate synthase family. In terms of assembly, homotetramer. It depends on NAD(+) as a cofactor.

It is found in the cytoplasm. It carries out the reaction D-glucose 6-phosphate = 1D-myo-inositol 3-phosphate. It participates in polyol metabolism; myo-inositol biosynthesis; myo-inositol from D-glucose 6-phosphate: step 1/2. Its function is as follows. Key enzyme in myo-inositol biosynthesis pathway that catalyzes the conversion of glucose 6-phosphate to 1-myo-inositol 1-phosphate in a NAD-dependent manner. Rate-limiting enzyme in the synthesis of all inositol-containing compounds. The polypeptide is Inositol-3-phosphate synthase (INO1) (Candida glabrata (strain ATCC 2001 / BCRC 20586 / JCM 3761 / NBRC 0622 / NRRL Y-65 / CBS 138) (Yeast)).